Here is a 492-residue protein sequence, read N- to C-terminus: Cysteine--tRNA ligase (492 aa).

Residue Cys-29 coordinates Zn(2+). The 'HIGH' region motif lies at 31-41 (LTTSDPPHLGH). Residues Cys-229, His-254, and Glu-258 each coordinate Zn(2+). The short motif at 286–290 (KMSSS) is the 'KMSKS' region element.

It belongs to the class-I aminoacyl-tRNA synthetase family. Requires Zn(2+) as cofactor.

It localises to the cytoplasm. The catalysed reaction is tRNA(Cys) + L-cysteine + ATP = L-cysteinyl-tRNA(Cys) + AMP + diphosphate. This is Cysteine--tRNA ligase from Haloarcula marismortui (strain ATCC 43049 / DSM 3752 / JCM 8966 / VKM B-1809) (Halobacterium marismortui).